Reading from the N-terminus, the 204-residue chain is Urease accessory protein UreG (204 aa).

12 to 19 (GPVGSGKT) lines the GTP pocket.

The protein belongs to the SIMIBI class G3E GTPase family. UreG subfamily. In terms of assembly, homodimer. UreD, UreF and UreG form a complex that acts as a GTP-hydrolysis-dependent molecular chaperone, activating the urease apoprotein by helping to assemble the nickel containing metallocenter of UreC. The UreE protein probably delivers the nickel.

The protein resides in the cytoplasm. Its function is as follows. Facilitates the functional incorporation of the urease nickel metallocenter. This process requires GTP hydrolysis, probably effectuated by UreG. This chain is Urease accessory protein UreG, found in Pseudomonas aeruginosa (strain LESB58).